Consider the following 626-residue polypeptide: tRNA uridine 5-carboxymethylaminomethyl modification enzyme MnmG (626 aa).

FAD is bound at residue 13–18 (GGGHAG). Residue 273–287 (GPRYCPSIEDKIHRF) coordinates NAD(+).

It belongs to the MnmG family. Homodimer. Heterotetramer of two MnmE and two MnmG subunits. The cofactor is FAD.

The protein localises to the cytoplasm. Functionally, NAD-binding protein involved in the addition of a carboxymethylaminomethyl (cmnm) group at the wobble position (U34) of certain tRNAs, forming tRNA-cmnm(5)s(2)U34. The chain is tRNA uridine 5-carboxymethylaminomethyl modification enzyme MnmG from Acinetobacter baumannii (strain ATCC 17978 / DSM 105126 / CIP 53.77 / LMG 1025 / NCDC KC755 / 5377).